The primary structure comprises 172 residues: Cyclin-L1 (172 aa).

The tract at residues 1–36 (MASGPHSTATAAAAASSAAPSAGGSSSGTTTTTTTT) is disordered. Residues 88-168 (ELIQAAGILL…LRGKSDQLHL (81 aa)) are cyclin-like.

Belongs to the cyclin family. Cyclin L subfamily. Interacts with POLR2A via its hyperphosphorylated C-terminal domain (CTD). Interacts with CDK11A, CDK11B, CDK12 and CDK13. May form a ternary complex with CDK11B and casein kinase II (CKII). Interacts with pre-mRNA-splicing factors, including at least SRSF1, SRSF2 and SRSF7/SLU7.

It localises to the nucleus speckle. The protein localises to the nucleus. The protein resides in the nucleoplasm. In terms of biological role, involved in pre-mRNA splicing. Functions in association with cyclin-dependent kinases (CDKs). May play a role in the regulation of RNA polymerase II (pol II). Inhibited by the CDK-specific inhibitor CDKN1A/p21. The sequence is that of Cyclin-L1 (CCNL1) from Pongo abelii (Sumatran orangutan).